Reading from the N-terminus, the 109-residue chain is Cell division suppressor protein YneA (109 aa).

One can recognise a LysM domain in the interval 39–90; the sequence is SEVDVNEGDSIWALADQYAAKSDMAKADFVSWVEKENNLTDGHVKAGDYVVI.

Belongs to the YneA family.

Its subcellular location is the cytoplasm. Its function is as follows. Inhibits cell division during the SOS response. Affects a later stage of the cell division protein assembly, after the assembly of the Z ring, by probably suppressing recruitment of FtsL and/or DivIC to the division machinery. This chain is Cell division suppressor protein YneA, found in Listeria innocua serovar 6a (strain ATCC BAA-680 / CLIP 11262).